The chain runs to 126 residues: Holo-[acyl-carrier-protein] synthase (126 aa).

Residues Asp-9 and Glu-58 each contribute to the Mg(2+) site.

This sequence belongs to the P-Pant transferase superfamily. AcpS family. It depends on Mg(2+) as a cofactor.

It localises to the cytoplasm. It carries out the reaction apo-[ACP] + CoA = holo-[ACP] + adenosine 3',5'-bisphosphate + H(+). Its function is as follows. Transfers the 4'-phosphopantetheine moiety from coenzyme A to a Ser of acyl-carrier-protein. This is Holo-[acyl-carrier-protein] synthase from Cronobacter sakazakii (strain ATCC BAA-894) (Enterobacter sakazakii).